The following is a 92-amino-acid chain: AVSCGQVDTALTPCLTYLTKGGTPSTQCCSGVRSLKSMTGTKVPDRQAACNCLKQAAARYQGIKDAAAALSQKCGVQLSVPISRSTDCSKIS.

Cystine bridges form between cysteine 4–cysteine 52, cysteine 14–cysteine 28, cysteine 29–cysteine 74, and cysteine 50–cysteine 88.

The protein belongs to the plant LTP family. As to expression, expressed in seeds and, at very low levels, in pulp of fruit (at protein level).

Plant non-specific lipid-transfer proteins transfer phospholipids as well as galactolipids across membranes. May play a role in wax or cutin deposition in the cell walls of expanding epidermal cells and certain secretory tissues. The chain is Non-specific lipid-transfer protein 1 from Actinidia deliciosa (Kiwi).